Reading from the N-terminus, the 596-residue chain is Arginine--tRNA ligase (596 aa).

Positions 128–138 match the 'HIGH' region motif; that stretch reads ANPTSSLHVGH.

It belongs to the class-I aminoacyl-tRNA synthetase family. Monomer.

The protein resides in the cytoplasm. The enzyme catalyses tRNA(Arg) + L-arginine + ATP = L-arginyl-tRNA(Arg) + AMP + diphosphate. The chain is Arginine--tRNA ligase from Acinetobacter baylyi (strain ATCC 33305 / BD413 / ADP1).